The following is a 174-amino-acid chain: Ubiquinone biosynthesis accessory factor UbiT (174 aa).

Positions 45 to 133 constitute an SCP2 domain; it reads LDDGELEFLE…LGLYVKNLMD (89 aa).

This sequence belongs to the UbiT family.

It participates in cofactor biosynthesis; ubiquinone biosynthesis. Its function is as follows. Required for O(2)-independent ubiquinone (coenzyme Q) biosynthesis. Likely functions as an accessory factor. This chain is Ubiquinone biosynthesis accessory factor UbiT, found in Escherichia coli O157:H7.